The sequence spans 258 residues: Phosphate import ATP-binding protein PstB (258 aa).

Residues 5-247 (LDLKDVNIYY…EKIFSNPRQK (243 aa)) form the ABC transporter domain. 37 to 44 (GPSGCGKS) is a binding site for ATP.

Belongs to the ABC transporter superfamily. Phosphate importer (TC 3.A.1.7) family. In terms of assembly, the complex is composed of two ATP-binding proteins (PstB), two transmembrane proteins (PstC and PstA) and a solute-binding protein (PstS).

The protein localises to the cell membrane. It carries out the reaction phosphate(out) + ATP + H2O = ADP + 2 phosphate(in) + H(+). Part of the ABC transporter complex PstSACB involved in phosphate import. Responsible for energy coupling to the transport system. This Mycolicibacterium smegmatis (Mycobacterium smegmatis) protein is Phosphate import ATP-binding protein PstB.